The sequence spans 264 residues: Hemin import ATP-binding protein HmuV (264 aa).

In terms of domain architecture, ABC transporter spans 2 to 241 (IEVSGVSVRL…ETMLSVFGLR (240 aa)). 34–41 (GPNGSGKT) serves as a coordination point for ATP.

It belongs to the ABC transporter superfamily. Heme (hemin) importer (TC 3.A.1.14.5) family. In terms of assembly, the complex is composed of two ATP-binding proteins (HmuV), two transmembrane proteins (HmuU) and a solute-binding protein (HmuT).

It is found in the cell inner membrane. Part of the ABC transporter complex HmuTUV involved in hemin import. Responsible for energy coupling to the transport system. The polypeptide is Hemin import ATP-binding protein HmuV (Rhizobium leguminosarum).